We begin with the raw amino-acid sequence, 690 residues long: MIIKQDKLSTFYPLVSIIIPVYNGANYMREAIDSALAQTYKNIEVIVVNDGSKDSGETEAIALSYGDKIRYFHKENGGCGSALNYGIKNMKGKYFSWLSHDDLYYPNKVEHQINILNKLNNKNTIIYGGYELVDKNGKFLYHIRPDSVLTTDKLNISLLPLLRGLIHGCSLLIPVKYFHEVDMFDETLPSTQDYDLWFKIFRVASIYFDKLILIKSRFHSEQGSKKISAHNEECNALWSSFLQKLTEEEMIKMEGSAYLFLTRTANFLSSTPYQEAYALANNMAKQILRDAKVSVIIPVYNRINWTIQSIESVLNQTHENFEVIVINDGSTEDISELIKFCKKDKRIQYFHKKNEGPASARNLGIKKSSGKYIAFLDSDDLFFHNKLELQLKFMEENNFIFSHTSYQRIDEEGKYLESINSGSFSGNVFPKIIQTCPIAMPTVMGTLALFQENLFPENIRSGEDCCLWISISSRNLLGGISKELSKVRIRGDNTTFMNPNKYSQGLINITSYVLNNAYLAKFAPFTINLLLTAVTQLKILESKNELELLKNEDESELLENEDKSESLENEDKSESLENEDKSESLENEDKSESLENEKKEKNVEKNNNYFTQYNYPIIKQKVRKYYVKKLLENKKKEENNYFISYLKIKLKSYYFIAKILILLTIASLKEDGVRATISKIKRWFKKHRRF.

The tract at residues 553 to 601 (DESELLENEDKSESLENEDKSESLENEDKSESLENEDKSESLENEKKEK) is disordered. The span at 560–601 (NEDKSESLENEDKSESLENEDKSESLENEDKSESLENEKKEK) shows a compositional bias: basic and acidic residues.

Belongs to the glycosyltransferase 2 family.

This is an uncharacterized protein from Rickettsia bellii (strain RML369-C).